The primary structure comprises 376 residues: Delta(12) fatty acid desaturase fat-2 (376 aa).

Helical transmembrane passes span 45–65 (ISYL…VPYI), 69–89 (LGWI…SALF), 203–223 (VKCA…FVLC), and 228–248 (YTFV…LVII).

The protein belongs to the fatty acid desaturase type 1 family.

The protein resides in the membrane. It carries out the reaction (9Z)-octadecenoyl-CoA + 2 Fe(II)-[cytochrome b5] + O2 + 2 H(+) = (9Z,12Z)-octadecadienoyl-CoA + 2 Fe(III)-[cytochrome b5] + 2 H2O. The catalysed reaction is (9Z)-hexadecenoyl-CoA + 2 Fe(II)-[cytochrome b5] + O2 + 2 H(+) = (9Z,12Z)-hexadecadienoyl-CoA + 2 Fe(III)-[cytochrome b5] + 2 H2O. The enzyme catalyses (9Z,12Z)-octadecadienoyl-CoA + 2 Fe(II)-[cytochrome b5] + O2 + 2 H(+) = (9Z,12Z,15Z)-octadecatrienoyl-CoA + 2 Fe(III)-[cytochrome b5] + 2 H2O. It catalyses the reaction (9Z)-heptadecenoyl-CoA + 2 Fe(II)-[cytochrome b5] + O2 + 2 H(+) = (9Z,12Z)-heptadecadienoyl-CoA + 2 Fe(III)-[cytochrome b5] + 2 H2O. It carries out the reaction (9Z)-pentadecenoyl-CoA + 2 Fe(II)-[cytochrome b5] + O2 + 2 H(+) = (9Z,12Z)-pentadecadienoyl-CoA + 2 Fe(III)-[cytochrome b5] + 2 H2O. The catalysed reaction is (6Z,9Z,12Z)-octadecatrienoyl-CoA + 2 Fe(II)-[cytochrome b5] + O2 + 2 H(+) = (6Z,9Z,12Z,15Z)-octadecatetraenoyl-CoA + 2 Fe(III)-[cytochrome b5] + 2 H2O. The enzyme catalyses (9Z)-tetradecenoyl-CoA + 2 Fe(II)-[cytochrome b5] + O2 + 2 H(+) = (9Z,12Z)-tetradecadienoyl-CoA + 2 Fe(III)-[cytochrome b5] + 2 H2O. Its pathway is lipid metabolism; polyunsaturated fatty acid biosynthesis. In terms of biological role, can function as a Delta(12)/Delta(15) bifunctional desaturase and behaves as a nu +3' desaturase. Introduces a double bond in the fatty acid chain three carbons away from an existing double bond to biosynthesize polyunsaturated fatty acids (PUFAs) endogenously (PUFAs are essential for membrane structure and many cellular and physiological processes). Acts on a number of substrates like oleoyl-CoA ((9Z)-octadecenoyl-CoA, 18:1n-9), palmitoleoyl-CoA ((9Z)-hexadecenoyl-CoA, 16:1n-7), and gamma-linolenoyl-CoA ((6Z,9Z,12Z)-octadecatrienoyl-CoA, 18:3n-6), to generate linoleoyl-CoA ((9Z,12Z)-octadecadienoyl-CoA, 18:2n-6), (9Z,12Z)-hexadecadienoyl-CoA (16:2n-4) and (6Z,9Z,12Z,15Z)-octadecatetraenoyl-CoA (18:4n-3) respectively. Unlike plants, Caenorhabditis elegans desaturases seem to use fatty acyl-CoAs as substrates. The chain is Delta(12) fatty acid desaturase fat-2 (fat-2) from Caenorhabditis elegans.